The primary structure comprises 598 residues: Aspartate--tRNA(Asp/Asn) ligase (598 aa).

E177 provides a ligand contact to L-aspartate. Residues 201 to 204 (QLFK) form an aspartate region. R223 lines the L-aspartate pocket. ATP is bound by residues 223–225 (RDE) and Q232. H456 lines the L-aspartate pocket. E493 contacts ATP. L-aspartate is bound at residue R500. 545–548 (GLDR) serves as a coordination point for ATP.

Belongs to the class-II aminoacyl-tRNA synthetase family. Type 1 subfamily. Homodimer.

It localises to the cytoplasm. It catalyses the reaction tRNA(Asx) + L-aspartate + ATP = L-aspartyl-tRNA(Asx) + AMP + diphosphate. Its function is as follows. Aspartyl-tRNA synthetase with relaxed tRNA specificity since it is able to aspartylate not only its cognate tRNA(Asp) but also tRNA(Asn). Reaction proceeds in two steps: L-aspartate is first activated by ATP to form Asp-AMP and then transferred to the acceptor end of tRNA(Asp/Asn). This is Aspartate--tRNA(Asp/Asn) ligase from Prochlorococcus marinus (strain MIT 9215).